Reading from the N-terminus, the 459-residue chain is Probable ECA polymerase (459 aa).

11 helical membrane passes run 3–23, 37–57, 65–85, 119–139, 154–174, 181–201, 206–226, 227–247, 340–360, 377–397, and 409–429; these read LTQF…ILTL, IFFS…TCLL, VVPV…YGIY, LASV…FLLF, GVAL…VYFL, WLFF…VVGG, IIIA…ITLW, MLVT…LKRY, LVVM…GLII, YKAA…IVLA, and VFFC…YWLF.

The protein belongs to the WzyE family. As to quaternary structure, probably part of a complex composed of WzxE, WzyE and WzzE.

It is found in the cell inner membrane. It participates in bacterial outer membrane biogenesis; enterobacterial common antigen biosynthesis. In terms of biological role, probably involved in the polymerization of enterobacterial common antigen (ECA) trisaccharide repeat units. The sequence is that of Probable ECA polymerase from Photorhabdus laumondii subsp. laumondii (strain DSM 15139 / CIP 105565 / TT01) (Photorhabdus luminescens subsp. laumondii).